The primary structure comprises 211 residues: Uracil phosphoribosyltransferase (211 aa).

5-phospho-alpha-D-ribose 1-diphosphate-binding positions include Arg-78, Arg-103, and 130–138 (DPMLATGGT). Uracil-binding positions include Ile-195 and 200–202 (GDA). Asp-201 serves as a coordination point for 5-phospho-alpha-D-ribose 1-diphosphate.

Belongs to the UPRTase family. It depends on Mg(2+) as a cofactor.

The catalysed reaction is UMP + diphosphate = 5-phospho-alpha-D-ribose 1-diphosphate + uracil. It participates in pyrimidine metabolism; UMP biosynthesis via salvage pathway; UMP from uracil: step 1/1. Allosterically activated by GTP. Its function is as follows. Catalyzes the conversion of uracil and 5-phospho-alpha-D-ribose 1-diphosphate (PRPP) to UMP and diphosphate. This Paenarthrobacter aurescens (strain TC1) protein is Uracil phosphoribosyltransferase.